The chain runs to 219 residues: Guanylate kinase (219 aa).

The Guanylate kinase-like domain maps to 15–194 (GLMFVLSSPS…AFAEVQSILK (180 aa)). 22–29 (SPSGAGKT) contacts ATP.

Belongs to the guanylate kinase family.

It is found in the cytoplasm. It catalyses the reaction GMP + ATP = GDP + ADP. Essential for recycling GMP and indirectly, cGMP. This chain is Guanylate kinase, found in Nitrobacter hamburgensis (strain DSM 10229 / NCIMB 13809 / X14).